Here is a 96-residue protein sequence, read N- to C-terminus: Co-chaperonin GroES (96 aa).

The protein belongs to the GroES chaperonin family. As to quaternary structure, heptamer of 7 subunits arranged in a ring. Interacts with the chaperonin GroEL.

The protein resides in the cytoplasm. Its function is as follows. Together with the chaperonin GroEL, plays an essential role in assisting protein folding. The GroEL-GroES system forms a nano-cage that allows encapsulation of the non-native substrate proteins and provides a physical environment optimized to promote and accelerate protein folding. GroES binds to the apical surface of the GroEL ring, thereby capping the opening of the GroEL channel. This Citrifermentans bemidjiense (strain ATCC BAA-1014 / DSM 16622 / JCM 12645 / Bem) (Geobacter bemidjiensis) protein is Co-chaperonin GroES.